We begin with the raw amino-acid sequence, 147 residues long: uncharacterized protein (147 aa).

This sequence to B.subtilis XkdM.

This is an uncharacterized protein from Bacillus subtilis (strain 168).